Here is a 352-residue protein sequence, read N- to C-terminus: Popeye domain-containing protein 1 (352 aa).

At 1–38 (MSNTTSALPSSVPAVSLDPNATLCQDWEQSHHLLFHLA) the chain is on the extracellular side. Residues asparagine 3 and asparagine 20 are each glycosylated (N-linked (GlcNAc...) asparagine). Residues 39 to 59 (NLSLGLGFLIPTTLALHMIFL) form a helical membrane-spanning segment. A topological domain (cytoplasmic) is located at residue arginine 60. A helical membrane pass occupies residues 61–81 (LLLMTGCSLFIAWATLYRCTL). Position 82 (aspartate 82) is a topological domain, extracellular. Residues 83 to 103 (VMVWNVVFLLVNFMHFFFLLY) traverse the membrane as a helical segment. At 104–352 (KRRPIKIDRE…NVSKTTKKDI (249 aa)) the chain is on the cytoplasmic side. The segment at 299–352 (ILRGGSTGSSLQKNPLTKTSTTMKPIEEGLEDDVFESESPTTSQNVSKTTKKDI) is disordered. 2 stretches are compositionally biased toward polar residues: residues 306–321 (GSSL…STTM) and 336–346 (ESPTTSQNVSK).

This sequence belongs to the popeye family. As to expression, expressed in skeletal muscle (at protein level).

Its subcellular location is the lateral cell membrane. The protein resides in the cell junction. It is found in the tight junction. It localises to the membrane. The protein localises to the cell membrane. Its subcellular location is the sarcolemma. The protein resides in the caveola. Functionally, cell adhesion molecule involved in the establishment and/or maintenance of cell integrity. Involved in skeletal muscle and heart development as well as in the maintenance of heart function. May play a role in vamp3-mediated vesicular transport and recycling of receptor molecules. Involved in the formation and regulation of the tight junction (TJ) paracellular permeability barrier in epithelial cells. May induce primordial adhesive contact and aggregation of epithelial cells in a Ca(2+)-independent manner. May be involved in epithelial movement during corneal sheet formation and regeneration. May play a role in the regulation of cell shape and movement by modulating the Rho-GTPase activity. May also be involved in striated muscle regeneration and in the regulation of cell spreading. This chain is Popeye domain-containing protein 1 (popdc1), found in Danio rerio (Zebrafish).